Here is a 257-residue protein sequence, read N- to C-terminus: Indole-3-glycerol phosphate synthase (257 aa).

It belongs to the TrpC family.

The catalysed reaction is 1-(2-carboxyphenylamino)-1-deoxy-D-ribulose 5-phosphate + H(+) = (1S,2R)-1-C-(indol-3-yl)glycerol 3-phosphate + CO2 + H2O. It participates in amino-acid biosynthesis; L-tryptophan biosynthesis; L-tryptophan from chorismate: step 4/5. The protein is Indole-3-glycerol phosphate synthase of Halalkalibacterium halodurans (strain ATCC BAA-125 / DSM 18197 / FERM 7344 / JCM 9153 / C-125) (Bacillus halodurans).